Consider the following 858-residue polypeptide: Elongation factor 2 (858 aa).

The region spanning 17-362 (ANIRNMSVIA…MITIHLPSPV (346 aa)) is the tr-type G domain. GTP contacts are provided by residues 26 to 33 (AHVDHGKS), 158 to 161 (NKMD), and 216 to 218 (SGL). The residue at position 715 (His715) is a Diphthamide.

Belongs to the TRAFAC class translation factor GTPase superfamily. Classic translation factor GTPase family. EF-G/EF-2 subfamily. In terms of assembly, binds to 80S ribosomes. Actively translating ribosomes show mutually exclusive binding of eIF5a (EIF5A or EIF5A2) and EEF2/eEF2. Interacts with serbp1; interaction sequesters eef2/eEF2 at the A-site of the ribosome, thereby blocking the interaction sites of the mRNA-tRNA complex, promoting ribosome stabilization and hibernation. Interacts with habp4; interaction takes place at the A-site of hibernating ribosomes and promotes ribosome stabilization.

It is found in the cytoplasm. The protein resides in the nucleus. It carries out the reaction GTP + H2O = GDP + phosphate + H(+). Its function is as follows. Catalyzes the GTP-dependent ribosomal translocation step during translation elongation. During this step, the ribosome changes from the pre-translocational (PRE) to the post-translocational (POST) state as the newly formed A-site-bound peptidyl-tRNA and P-site-bound deacylated tRNA move to the P and E sites, respectively. Catalyzes the coordinated movement of the two tRNA molecules, the mRNA and conformational changes in the ribosome. This Xenopus laevis (African clawed frog) protein is Elongation factor 2.